Here is a 363-residue protein sequence, read N- to C-terminus: MSNQDLINNKSKAGLTYAKAGVNIDMGNAMVEKIKPFIRATKRAGADAEIGGFGGLFDLKAAGFTDPILVAANDGVGTKLKIAIEVGHHNTVGIDLVAMCVNDLLVQGAEPLFFLDYFATGKLDPEQGAAIVSGIAEGCKQSGAALIGGETAEMPGMYAEGDYDLAGFAVGACERSMLLPSKNLTEGDIILGLSASGIHSNGFSLVRRIIEQNDLKWNDPAPFDPSNNLGVALLTPTRIYVKSLLPIMRKYEGVKALAHITGGGFLENIPRVIPSSLCAEINLSTINVPSVFSWIAKQGKIEETEMLRTFNCGIGMIIIVGQHTAEAVTQALEKNGETVTPLGILTKRQDQNKGILYRGVLHL.

This sequence belongs to the AIR synthase family.

It localises to the cytoplasm. It catalyses the reaction 2-formamido-N(1)-(5-O-phospho-beta-D-ribosyl)acetamidine + ATP = 5-amino-1-(5-phospho-beta-D-ribosyl)imidazole + ADP + phosphate + H(+). Its pathway is purine metabolism; IMP biosynthesis via de novo pathway; 5-amino-1-(5-phospho-D-ribosyl)imidazole from N(2)-formyl-N(1)-(5-phospho-D-ribosyl)glycinamide: step 2/2. In Bartonella tribocorum (strain CIP 105476 / IBS 506), this protein is Phosphoribosylformylglycinamidine cyclo-ligase.